Reading from the N-terminus, the 434-residue chain is Histidinol dehydrogenase (434 aa).

Residues serine 242, glutamine 264, and histidine 267 each contribute to the substrate site. Zn(2+) contacts are provided by glutamine 264 and histidine 267. Catalysis depends on proton acceptor residues glutamate 332 and histidine 333. Residues histidine 333, aspartate 366, glutamate 420, and histidine 425 each contribute to the substrate site. Aspartate 366 contacts Zn(2+). Zn(2+) is bound at residue histidine 425.

It belongs to the histidinol dehydrogenase family. Requires Zn(2+) as cofactor.

The catalysed reaction is L-histidinol + 2 NAD(+) + H2O = L-histidine + 2 NADH + 3 H(+). It functions in the pathway amino-acid biosynthesis; L-histidine biosynthesis; L-histidine from 5-phospho-alpha-D-ribose 1-diphosphate: step 9/9. Its function is as follows. Catalyzes the sequential NAD-dependent oxidations of L-histidinol to L-histidinaldehyde and then to L-histidine. In Oleidesulfovibrio alaskensis (strain ATCC BAA-1058 / DSM 17464 / G20) (Desulfovibrio alaskensis), this protein is Histidinol dehydrogenase.